The following is a 144-amino-acid chain: Large ribosomal subunit protein uL15 (144 aa).

A disordered region spans residues 1 to 53; that stretch reads MRLNSLSPAEGAKHSAKRLGRGIGSGLGKTGGRGHKGQKSRTGGGVRRGFEGG. Positions 21–31 are enriched in gly residues; it reads RGIGSGLGKTG.

It belongs to the universal ribosomal protein uL15 family. In terms of assembly, part of the 50S ribosomal subunit.

Functionally, binds to the 23S rRNA. This is Large ribosomal subunit protein uL15 from Glaesserella parasuis serovar 5 (strain SH0165) (Haemophilus parasuis).